Here is a 460-residue protein sequence, read N- to C-terminus: Angiopoietin-related protein 3 (460 aa).

An N-terminal signal peptide occupies residues 1 to 16 (MFTIKLLLFIVPLVIS). Residues 17 to 165 (SRIDQDNSSF…PEHPEVTSLK (149 aa)) are sufficient to inhibit LPL lipase activity. The tract at residues 17-207 (SRIDQDNSSF…EIENQLRRTS (191 aa)) is sufficient to inhibit LIPG/EL phospholipase activity. The interval 32–56 (EPKSRFAMLDDVKILANGLLQLGHG) is required for inhibition of LPL lipase activity. Residues 85 to 210 (LSLQTSEIKE…NQLRRTSIQE (126 aa)) are a coiled coil. A glycan (N-linked (GlcNAc...) asparagine) is linked at Asn115. A glycan (O-linked (GalNAc) threonine) is linked at Thr226. Residues 237–455 (VKHDGIPAEC…STKMLIHPTD (219 aa)) form the Fibrinogen C-terminal domain. Cys246 and Cys274 are disulfide-bonded. 2 N-linked (GlcNAc...) asparagine glycosylation sites follow: Asn296 and Asn357. A disulfide bridge connects residues Cys394 and Cys408.

As to quaternary structure, interacts with ANGPTL8. Interacts with ITGB3. O-glycosylated at Thr-226 by GALNT2; blocks processing and activation by proprotein convertases. In terms of processing, in part proteolytically cleaved by proprotein convertases; proposed to be involved in activation. Expressed principally in liver. Weakly expressed in kidney. Binds to adipocytes. Increased expression and colocalization with activated ITGB3 in glomeruli of patients with nephrotic syndrome showing effaced podocyte foot processes (at protein level).

The protein resides in the secreted. The protein localises to the cell projection. It is found in the lamellipodium. Acts in part as a hepatokine that is involved in regulation of lipid and glucose metabolism. Proposed to play a role in the trafficking of energy substrates to either storage or oxidative tissues in response to food intake. Has a stimulatory effect on plasma triglycerides (TG), which is achieved by suppressing plasma TG clearance via inhibition of LPL activity. The inhibition of LPL activity appears to be an indirect mechanism involving recruitment of proprotein convertases PCSK6 and FURIN to LPL leading to cleavage and dissociation of LPL from the cell surface; the function does not require ANGPTL3 proteolytic cleavage but seems to be mediated by the N-terminal domain, and is not inhibited by GPIHBP1. Can inhibit endothelial lipase, causing increased plasma levels of high density lipoprotein (HDL) cholesterol and phospholipids. Can bind to adipocytes to activate lipolysis, releasing free fatty acids and glycerol. Suppresses LPL specifically in oxidative tissues which is required to route very low density lipoprotein (VLDL)-TG to white adipose tissue (WAT) for storage in response to food; the function may involve cooperation with circulating, liver-derived ANGPTL8 and ANGPTL4 expression in WAT. Contributes to lower plasma levels of low density lipoprotein (LDL)-cholesterol by a mechanism that is independent of the canonical pathway implicating APOE and LDLR. May stimulate hypothalamic LPL activity. In terms of biological role, in vitro inhibits LPL activity; not effective on GPIHBP1-stabilized LPL. Its function is as follows. Involved in angiogenesis. Binds to endothelial cells via integrin alpha-V/beta-3 (ITGAV:ITGB3), activates FAK, MAPK and Akt signaling pathways and induces cell adhesion and cell migration. Secreted from podocytes, may modulate properties of glomerular endothelial cells involving integrin alpha-V/beta-3 and Akt signaling. May increase the motility of podocytes. May induce actin filament rearrangements in podocytes implicating integrin alpha-V/beta-3 and Rac1 activation. Binds to hematopoietic stem cells (HSC) and is involved in the regulation of HSC activity probably implicating down-regulation of IKZF1/IKAROS. The polypeptide is Angiopoietin-related protein 3 (ANGPTL3) (Homo sapiens (Human)).